The following is a 72-amino-acid chain: ATP synthase subunit c (72 aa).

2 consecutive transmembrane segments (helical) span residues 5–25 and 52–72; these read LLAA…IGIA and GLSE…LFVV.

This sequence belongs to the ATPase C chain family. In terms of assembly, F-type ATPases have 2 components, F(1) - the catalytic core - and F(0) - the membrane proton channel. F(1) has five subunits: alpha(3), beta(3), gamma(1), delta(1), epsilon(1). F(0) has three main subunits: a(1), b(2) and c(10-14). The alpha and beta chains form an alternating ring which encloses part of the gamma chain. F(1) is attached to F(0) by a central stalk formed by the gamma and epsilon chains, while a peripheral stalk is formed by the delta and b chains.

The protein localises to the cell membrane. In terms of biological role, f(1)F(0) ATP synthase produces ATP from ADP in the presence of a proton or sodium gradient. F-type ATPases consist of two structural domains, F(1) containing the extramembraneous catalytic core and F(0) containing the membrane proton channel, linked together by a central stalk and a peripheral stalk. During catalysis, ATP synthesis in the catalytic domain of F(1) is coupled via a rotary mechanism of the central stalk subunits to proton translocation. Its function is as follows. Key component of the F(0) channel; it plays a direct role in translocation across the membrane. A homomeric c-ring of between 10-14 subunits forms the central stalk rotor element with the F(1) delta and epsilon subunits. The sequence is that of ATP synthase subunit c from Clostridium perfringens (strain SM101 / Type A).